A 76-amino-acid chain; its full sequence is Exodeoxyribonuclease 7 small subunit (76 aa).

Belongs to the XseB family. As to quaternary structure, heterooligomer composed of large and small subunits.

It is found in the cytoplasm. The enzyme catalyses Exonucleolytic cleavage in either 5'- to 3'- or 3'- to 5'-direction to yield nucleoside 5'-phosphates.. Its function is as follows. Bidirectionally degrades single-stranded DNA into large acid-insoluble oligonucleotides, which are then degraded further into small acid-soluble oligonucleotides. This Enterococcus faecalis (strain ATCC 700802 / V583) protein is Exodeoxyribonuclease 7 small subunit.